The primary structure comprises 260 residues: uncharacterized protein (260 aa).

In terms of domain architecture, ABC transporter spans Leu-4–Phe-231. ATP is bound at residue Gly-40–Thr-47.

This sequence belongs to the ABC transporter superfamily.

This is an uncharacterized protein from Bacillus subtilis (strain 168).